A 483-amino-acid polypeptide reads, in one-letter code: Probable zinc metalloprotease PTRG_04977 (483 aa).

An N-terminal signal peptide occupies residues 1-18 (MLFRSALLSNVLLLPACA). Asn96 and Asn121 each carry an N-linked (GlcNAc...) asparagine glycan. Positions 167, 187, and 220 each coordinate Zn(2+). Residue Asn235 is glycosylated (N-linked (GlcNAc...) asparagine). Asp247 serves as a coordination point for Zn(2+). N-linked (GlcNAc...) asparagine glycans are attached at residues Asn310, Asn362, Asn401, Asn411, and Asn421. Positions 396–483 (PAMPRNVTID…KSPAVYPFPG (88 aa)) constitute a Fibronectin type-III domain.

The protein belongs to the peptidase M28 family. M28B subfamily. Zn(2+) is required as a cofactor.

It localises to the secreted. The chain is Probable zinc metalloprotease PTRG_04977 from Pyrenophora tritici-repentis (strain Pt-1C-BFP) (Wheat tan spot fungus).